The sequence spans 110 residues: Large ribosomal subunit protein uL22 (110 aa).

Belongs to the universal ribosomal protein uL22 family. As to quaternary structure, part of the 50S ribosomal subunit.

In terms of biological role, this protein binds specifically to 23S rRNA; its binding is stimulated by other ribosomal proteins, e.g. L4, L17, and L20. It is important during the early stages of 50S assembly. It makes multiple contacts with different domains of the 23S rRNA in the assembled 50S subunit and ribosome. The globular domain of the protein is located near the polypeptide exit tunnel on the outside of the subunit, while an extended beta-hairpin is found that lines the wall of the exit tunnel in the center of the 70S ribosome. The polypeptide is Large ribosomal subunit protein uL22 (Bdellovibrio bacteriovorus (strain ATCC 15356 / DSM 50701 / NCIMB 9529 / HD100)).